We begin with the raw amino-acid sequence, 90 residues long: Protein LIM3 (90 aa).

A signal peptide spans 1-26; that stretch reads MAAVKFLVCSVLLVVLATQSEIGLAQ. 4 disulfides stabilise this stretch: Cys-28–Cys-65, Cys-38–Cys-54, Cys-55–Cys-80, and Cys-67–Cys-87.

Belongs to the A9/FIL1 family.

The protein resides in the secreted. This chain is Protein LIM3 (LIM3), found in Lilium longiflorum (Trumpet lily).